We begin with the raw amino-acid sequence, 899 residues long: Inner tegument protein (899 aa).

The interaction with large tegument protein stretch occupies residues 463–899 (WNYTWLDATS…SAILDAELSK (437 aa)).

The protein belongs to the herpesviridae inner tegument protein family. Interacts (via C-terminus) with the large tegument protein/LTP (via N-terminus).

It is found in the virion tegument. The protein resides in the host cytoplasm. It localises to the host nucleus. The protein localises to the host Golgi apparatus. Its subcellular location is the host trans-Golgi network. Plays an essential role in cytoplasmic secondary envelopment during viral egress. Interacts with the capsid via the large tegument protein/LTP and participates in its transport to the host trans-Golgi network (TGN) where secondary envelopment occurs. Modulates tegumentation and capsid accumulation at the viral assembly complex. In Saimiri sciureus (Common squirrel monkey), this protein is Inner tegument protein (63).